Reading from the N-terminus, the 847-residue chain is Glycogen phosphorylase, liver form (847 aa).

Residue A2 is modified to N-acetylalanine. S15 is subject to Phosphoserine; by PHK; in form phosphorylase a. Residues 43–45 (DRN), Y76, and R310 each bind AMP. At K364 the chain carries N6-succinyllysine. K470 bears the N6-acetyllysine mark. Phosphoserine is present on residues S524, S561, and S639. Residue K681 is modified to N6-(pyridoxal phosphate)lysine. Position 796 is an N6-acetyllysine (K796).

This sequence belongs to the glycogen phosphorylase family. Homodimer; enzymatically active. Interacts with PPP1R3B; recruits the phosphatase PP1 which dephosphorylates and inactivates PYGL/glycogen phosphorylase. It depends on pyridoxal 5'-phosphate as a cofactor. Acetylation, which is up-regulated by glucose and insulin and down-regulated by glucagon, inhibits the glycogen phosphorylase activity by promoting PPP1R3B-mediated recruitment of phosphatase PP1 and Ser-15 dephosphorylation. In terms of processing, phosphorylation at Ser-15 converts inactive phosphorylase b into active phosphorylase a. Dephosphorylation of Ser-15 by phosphatase PP1 inactivates the enzyme.

The protein localises to the cytoplasm. The protein resides in the cytosol. The enzyme catalyses [(1-&gt;4)-alpha-D-glucosyl](n) + phosphate = [(1-&gt;4)-alpha-D-glucosyl](n-1) + alpha-D-glucose 1-phosphate. Allosterically regulated through the non-covalent binding of metabolites, being activated by AMP and inhibited by ATP, ADP, and glucose-6-phosphate. The activity is also controlled by post-translational modifications including phosphorylation and acetylation. Functionally, allosteric enzyme that catalyzes the rate-limiting step in glycogen catabolism, the phosphorolytic cleavage of glycogen to produce glucose-1-phosphate, and plays a central role in maintaining cellular and organismal glucose homeostasis. The protein is Glycogen phosphorylase, liver form of Homo sapiens (Human).